A 195-amino-acid chain; its full sequence is Thioredoxin reductase-like selenoprotein T (195 aa).

The first 19 residues, 1-19 (MRLLLLLLVAASAMVRSEA), serve as a signal peptide directing secretion. Residues 46-49 (CVSU) constitute a cross-link (cysteinyl-selenocysteine (Cys-Sec)). Residue Sec49 is a non-standard amino acid, selenocysteine. The chain crosses the membrane as a helical span at residues 85 to 103 (IASFLSVFKLVLIGLIIVG).

The protein belongs to the SelWTH family. Selenoprotein T subfamily. Post-translationally, may contain a selenide-sulfide bond between Cys-46 and Sec-49. This bond is speculated to serve as redox-active pair. As to expression, ubiquitous. Highly expressed in the endocrine pancreas.

It is found in the endoplasmic reticulum membrane. It carries out the reaction [thioredoxin]-dithiol + NADP(+) = [thioredoxin]-disulfide + NADPH + H(+). Functionally, selenoprotein with thioredoxin reductase-like oxidoreductase activity. Protects dopaminergic neurons against oxidative stress and cell death. Involved in ADCYAP1/PACAP-induced calcium mobilization and neuroendocrine secretion. Plays a role in fibroblast anchorage and redox regulation. In gastric smooth muscle, modulates the contraction processes through the regulation of calcium release and MYLK activation. In pancreatic islets, involved in the control of glucose homeostasis, contributes to prolonged ADCYAP1/PACAP-induced insulin secretion. The polypeptide is Thioredoxin reductase-like selenoprotein T (Homo sapiens (Human)).